The chain runs to 315 residues: Cytochrome f (315 aa).

Residues Met-1–Ala-30 form the signal peptide. Heme is bound by residues Tyr-31, Cys-51, Cys-54, and His-55. The helical transmembrane segment at Ile-281–Leu-300 threads the bilayer.

This sequence belongs to the cytochrome f family. As to quaternary structure, the 4 large subunits of the cytochrome b6-f complex are cytochrome b6, subunit IV (17 kDa polypeptide, petD), cytochrome f and the Rieske protein, while the 4 small subunits are PetG, PetL, PetM and PetN. The complex functions as a dimer. The cofactor is heme.

Its subcellular location is the plastid. It is found in the chloroplast thylakoid membrane. Its function is as follows. Component of the cytochrome b6-f complex, which mediates electron transfer between photosystem II (PSII) and photosystem I (PSI), cyclic electron flow around PSI, and state transitions. The protein is Cytochrome f (petA) of Chlorella vulgaris (Green alga).